The following is a 137-amino-acid chain: Gonadotropin subunit beta-1 (137 aa).

The first 24 residues, 1–24 (MYCTHLMTLQLVVMAMLWVTPVRA), serve as a signal peptide directing secretion. Disulfide bonds link C32/C78, C46/C93, C55/C108, C59/C110, and C113/C120. The N-linked (GlcNAc...) asparagine glycan is linked to N36.

Belongs to the glycoprotein hormones subunit beta family. As to quaternary structure, heterodimer of an alpha and a beta chain.

The protein localises to the secreted. In terms of biological role, involved in gametogenesis and steroidogenesis. This Oncorhynchus keta (Chum salmon) protein is Gonadotropin subunit beta-1 (cgba).